A 311-amino-acid polypeptide reads, in one-letter code: DNA-directed RNA polymerase subunit alpha (311 aa).

The interval 1–227 (MAQFQIECIE…NLFCSLRNLD (227 aa)) is alpha N-terminal domain (alpha-NTD). The tract at residues 239–311 (DKKISQVLIE…GISLPKEKSD (73 aa)) is alpha C-terminal domain (alpha-CTD).

This sequence belongs to the RNA polymerase alpha chain family. In terms of assembly, in plastids the minimal PEP RNA polymerase catalytic core is composed of four subunits: alpha, beta, beta', and beta''. When a (nuclear-encoded) sigma factor is associated with the core the holoenzyme is formed, which can initiate transcription.

It localises to the plastid. Its subcellular location is the chloroplast. The enzyme catalyses RNA(n) + a ribonucleoside 5'-triphosphate = RNA(n+1) + diphosphate. In terms of biological role, DNA-dependent RNA polymerase catalyzes the transcription of DNA into RNA using the four ribonucleoside triphosphates as substrates. This chain is DNA-directed RNA polymerase subunit alpha, found in Pyropia yezoensis (Susabi-nori).